Reading from the N-terminus, the 117-residue chain is Hainantoxin-XV-5 (117 aa).

Residues 1 to 20 (MKLCAVIIASLLVCVAVASS) form the signal peptide. The interval 20 to 55 (SSDNQKEFAQEKEMTREETQSLGEHEKDDEVTGSEE) is disordered. Positions 21-56 (SDNQKEFAQEKEMTREETQSLGEHEKDDEVTGSEER) are excised as a propeptide. Residues 23-55 (NQKEFAQEKEMTREETQSLGEHEKDDEVTGSEE) are compositionally biased toward basic and acidic residues. Cystine bridges form between C58–C72, C65–C78, C69–C115, and C71–C91.

This sequence belongs to the neurotoxin 03 (Tx2) family. 02 subfamily. HNTX-XV sub-subfamily. In terms of tissue distribution, expressed by the venom gland.

The protein resides in the secreted. Putative ion channel inhibitor. This is Hainantoxin-XV-5 from Cyriopagopus hainanus (Chinese bird spider).